Here is a 331-residue protein sequence, read N- to C-terminus: MPVISKASSTTTNSSIPSCSRIGGQLCVWPGLRQLCLRKSLLYGVMWLLSMPLKTLRGARKTLKITHFCSISNMPSSLKIELVPCSKDNYAYLLHDEDTGTVGVVDPSEAAPVIEALSRKNWNLTYILNTHHHDDHIGGNAELKERYGAKVIGSAVDKDRIPGIDILLKDSDKWMFAGHEVRILDTPGHTQGHISFYFPGSATIFTGDLIYSLSCGTLSEGTPEQMLSSLQKIVSLPDDTNIYCGRENTAGNLKFALSVEPKNETLQSYATRVAHLRSQGLPSIPTTVKVEKACNPFLRISSKDIRKSLSIPDSATEAEALRRIQRARDRF.

The transit peptide at 1–76 (MPVISKASST…HFCSISNMPS (76 aa)) directs the protein to the mitochondrion. The Zn(2+) site is built by histidine 131 and histidine 133. Fe cation-binding residues include aspartate 135 and histidine 136. Residues histidine 189 and aspartate 208 each contribute to the Zn(2+) site. Residue aspartate 208 coordinates Fe cation. 246–248 (REN) is a substrate binding site.

Belongs to the metallo-beta-lactamase superfamily. Glyoxalase II family. Fe(2+) serves as cofactor. The cofactor is Fe(3+). Zn(2+) is required as a cofactor. Mainly expressed in roots, flowers and flower buds. Also detected in leaves.

It is found in the mitochondrion. It carries out the reaction an S-(2-hydroxyacyl)glutathione + H2O = a 2-hydroxy carboxylate + glutathione + H(+). The protein operates within secondary metabolite metabolism; methylglyoxal degradation; (R)-lactate from methylglyoxal: step 2/2. In terms of biological role, thiolesterase that catalyzes the hydrolysis of S-D-lactoyl-glutathione to form glutathione and D-lactic acid. The sequence is that of Hydroxyacylglutathione hydrolase 1, mitochondrial (GLX2-1) from Arabidopsis thaliana (Mouse-ear cress).